Consider the following 483-residue polypeptide: Sodium/pantothenate symporter (483 aa).

Topologically, residues 1–2 (MQ) are periplasmic. Residues 3–23 (LEVILPLVAYLVVVFGISVYA) form a helical membrane-spanning segment. At 24–42 (MRKRSTGTFLNEYFLGSRS) the chain is on the cytoplasmic side. A helical transmembrane segment spans residues 43–63 (MGGIVLAMTLTATYISASSFI). The Periplasmic portion of the chain corresponds to 64–73 (GGPGAAYKYG). A helical transmembrane segment spans residues 74 to 94 (LGWVLLAMIQLPAVWLSLGIL). At 95–123 (GKKFAILARRYNAVTLNDMLFARYQSRLL) the chain is on the cytoplasmic side. The helical transmembrane segment at 124-144 (VWLASLSLLVAFVGAMTVQFI) threads the bilayer. Residues 145-157 (GGARLLETAAGIP) are Periplasmic-facing. Residues 158 to 178 (YETGLLIFGISIALYTAFGGF) form a helical membrane-spanning segment. Topologically, residues 179-189 (RASVLNDTMQG) are cytoplasmic. The helical transmembrane segment at 190 to 210 (LVMLIGTVVLLIGVVHAAGGL) threads the bilayer. Residues 211–232 (SNAVQTLQTIDPQLVTPQGADD) lie on the Periplasmic side of the membrane. A helical transmembrane segment spans residues 233–253 (ILSPAFMTSFWVLVCFGVIGL). The Cytoplasmic segment spans residues 254 to 272 (PHTAVRCISYKDSKAVHRG). A helical transmembrane segment spans residues 273-293 (IIIGTIVVAILMFGMHLAGAL). Residues 294–305 (GRAVIPDLTVPD) lie on the Periplasmic side of the membrane. A helical transmembrane segment spans residues 306–326 (LVIPTLMVKVLPPFAAGIFLA). At 327–368 (APMAAIMSTINAQLLQSSATIIKDLYLNIRPDQMQNETRLKR) the chain is on the cytoplasmic side. A helical transmembrane segment spans residues 369–389 (MSAVITLVLGALLLLAAWKPP). Over 390–391 (EM) the chain is Periplasmic. Residues 392–412 (IIWLNLLAFGGLEAVFLWPLV) form a helical membrane-spanning segment. The Cytoplasmic portion of the chain corresponds to 413-423 (LGLYWERANAK). A helical membrane pass occupies residues 424 to 444 (GALSAMIVGGVLYAVLATLNI). Gln-445 is a topological domain (periplasmic). The chain crosses the membrane as a helical span at residues 446–466 (YLGFHPIVPSLLLSLLAFLVG). The Cytoplasmic portion of the chain corresponds to 467 to 483 (NRFGTSVPQATVLTTDK).

It belongs to the sodium:solute symporter (SSF) (TC 2.A.21) family.

The protein localises to the cell inner membrane. The enzyme catalyses (R)-pantothenate(in) + Na(+)(in) = (R)-pantothenate(out) + Na(+)(out). Pantothenate uptake is not reduced in osmotically shocked cells or by ATP depletion with arsenate, but is reduced greater than 90% by the dissipation of the membrane electrochemical gradient with 2,4-dinitrophenol. Its function is as follows. Catalyzes the sodium-dependent uptake of extracellular pantothenate. This is Sodium/pantothenate symporter from Escherichia coli (strain K12).